A 257-amino-acid chain; its full sequence is NAD-capped RNA hydrolase NudC (257 aa).

Lys25 and Arg69 together coordinate substrate. Zn(2+) is bound by residues Cys98 and Cys101. Glu111 provides a ligand contact to substrate. Zn(2+) contacts are provided by Cys116 and Cys119. Residue Tyr124 participates in substrate binding. The 124-residue stretch at 125–248 (PQIAPCIIVA…TVARRLIEDT (124 aa)) folds into the Nudix hydrolase domain. Residues Ala158, Glu174, and Glu178 each coordinate a divalent metal cation. The Nudix box signature appears at 159–180 (GFVEVGETLEQAVAREVMEESG). Position 192–199 (192–199 (QPWPFPQS)) interacts with substrate. Residue Glu219 participates in a divalent metal cation binding. Ala241 is a substrate binding site.

It belongs to the Nudix hydrolase family. NudC subfamily. In terms of assembly, homodimer. Requires Mg(2+) as cofactor. The cofactor is Mn(2+). It depends on Zn(2+) as a cofactor.

The enzyme catalyses a 5'-end NAD(+)-phospho-ribonucleoside in mRNA + H2O = a 5'-end phospho-adenosine-phospho-ribonucleoside in mRNA + beta-nicotinamide D-ribonucleotide + 2 H(+). It catalyses the reaction NAD(+) + H2O = beta-nicotinamide D-ribonucleotide + AMP + 2 H(+). It carries out the reaction NADH + H2O = reduced beta-nicotinamide D-ribonucleotide + AMP + 2 H(+). In terms of biological role, mRNA decapping enzyme that specifically removes the nicotinamide adenine dinucleotide (NAD) cap from a subset of mRNAs by hydrolyzing the diphosphate linkage to produce nicotinamide mononucleotide (NMN) and 5' monophosphate mRNA. The NAD-cap is present at the 5'-end of some mRNAs and stabilizes RNA against 5'-processing. Has preference for mRNAs with a 5'-end purine. Catalyzes the hydrolysis of a broad range of dinucleotide pyrophosphates. This Escherichia coli O45:K1 (strain S88 / ExPEC) protein is NAD-capped RNA hydrolase NudC.